Here is a 222-residue protein sequence, read N- to C-terminus: E3 ubiquitin-protein ligase RNF138 (222 aa).

The RING-type zinc finger occupies 17–57 (CPVCQEILQTPVRTQTCRHVFCRKCFMLAMKSGGAYCPLCR). Zn(2+)-binding residues include Cys-85, Cys-88, His-100, and Cys-104. The segment at 85–104 (CMYCGKMMKLHYMKLHYKSC) adopts a C2HC RNF-type zinc-finger fold. 2 consecutive C2H2-type zinc fingers follow at residues 134-157 (YKCP…NNVH) and 164-192 (MVCP…NARH). In terms of domain architecture, UIM spans 202-220 (INIDEEAQFQIAVANSYKI).

Interacts with nlk.2 (via C-terminus) and ube2k. Auto-ubiquitinated.

It localises to the chromosome. It carries out the reaction S-ubiquitinyl-[E2 ubiquitin-conjugating enzyme]-L-cysteine + [acceptor protein]-L-lysine = [E2 ubiquitin-conjugating enzyme]-L-cysteine + N(6)-ubiquitinyl-[acceptor protein]-L-lysine.. It participates in protein modification; protein ubiquitination. E3 ubiquitin-protein ligase involved in DNA damage response by promoting DNA resection and homologous recombination. Recruited to sites of double-strand breaks following DNA damage and specifically promotes double-strand break repair via homologous recombination. Together with nlk.2, involved in the ubiquitination and degradation of TCF/LEF. Also exhibits auto-ubiquitination activity in combination with ube2k. May act as a negative regulator in the Wnt/beta-catenin-mediated signaling pathway. This chain is E3 ubiquitin-protein ligase RNF138 (rnf138), found in Xenopus laevis (African clawed frog).